We begin with the raw amino-acid sequence, 348 residues long: Phospho-N-acetylmuramoyl-pentapeptide-transferase (348 aa).

10 helical membrane passes run 11–31, 68–88, 92–112, 128–148, 165–185, 196–216, 222–242, 251–271, 276–296, and 326–346; these read SWML…IFLG, AGGI…LPLG, TWLF…DDII, FVIQ…IYKG, VGHS…TIVG, LDGL…VVAL, PLAQ…FAFL, VFMG…CAVM, LLLI…ILQV, and VVAR…IAAL.

It belongs to the glycosyltransferase 4 family. MraY subfamily. It depends on Mg(2+) as a cofactor.

Its subcellular location is the cell inner membrane. The enzyme catalyses UDP-N-acetyl-alpha-D-muramoyl-L-alanyl-gamma-D-glutamyl-meso-2,6-diaminopimeloyl-D-alanyl-D-alanine + di-trans,octa-cis-undecaprenyl phosphate = di-trans,octa-cis-undecaprenyl diphospho-N-acetyl-alpha-D-muramoyl-L-alanyl-D-glutamyl-meso-2,6-diaminopimeloyl-D-alanyl-D-alanine + UMP. The protein operates within cell wall biogenesis; peptidoglycan biosynthesis. In terms of biological role, catalyzes the initial step of the lipid cycle reactions in the biosynthesis of the cell wall peptidoglycan: transfers peptidoglycan precursor phospho-MurNAc-pentapeptide from UDP-MurNAc-pentapeptide onto the lipid carrier undecaprenyl phosphate, yielding undecaprenyl-pyrophosphoryl-MurNAc-pentapeptide, known as lipid I. This Chlamydia caviae (strain ATCC VR-813 / DSM 19441 / 03DC25 / GPIC) (Chlamydophila caviae) protein is Phospho-N-acetylmuramoyl-pentapeptide-transferase.